A 170-amino-acid chain; its full sequence is Crossover junction endodeoxyribonuclease RuvC (170 aa).

Residues Asp-9, Glu-70, and Asp-145 contribute to the active site. Mg(2+)-binding residues include Asp-9, Glu-70, and Asp-145.

It belongs to the RuvC family. As to quaternary structure, homodimer which binds Holliday junction (HJ) DNA. The HJ becomes 2-fold symmetrical on binding to RuvC with unstacked arms; it has a different conformation from HJ DNA in complex with RuvA. In the full resolvosome a probable DNA-RuvA(4)-RuvB(12)-RuvC(2) complex forms which resolves the HJ. It depends on Mg(2+) as a cofactor.

It localises to the cytoplasm. The enzyme catalyses Endonucleolytic cleavage at a junction such as a reciprocal single-stranded crossover between two homologous DNA duplexes (Holliday junction).. The RuvA-RuvB-RuvC complex processes Holliday junction (HJ) DNA during genetic recombination and DNA repair. Endonuclease that resolves HJ intermediates. Cleaves cruciform DNA by making single-stranded nicks across the HJ at symmetrical positions within the homologous arms, yielding a 5'-phosphate and a 3'-hydroxyl group; requires a central core of homology in the junction. The consensus cleavage sequence is 5'-(A/T)TT(C/G)-3'. Cleavage occurs on the 3'-side of the TT dinucleotide at the point of strand exchange. HJ branch migration catalyzed by RuvA-RuvB allows RuvC to scan DNA until it finds its consensus sequence, where it cleaves and resolves the cruciform DNA. This is Crossover junction endodeoxyribonuclease RuvC from Chlamydia trachomatis serovar A (strain ATCC VR-571B / DSM 19440 / HAR-13).